The sequence spans 208 residues: Redox-sensing transcriptional repressor Rex 1 (208 aa).

A DNA-binding region (H-T-H motif) is located at residues 15-54 (SYYMCLERLLDEGVEVVSSEELARRLDLKASQIRKDLSYF). Position 89-94 (89-94 (GAGNIG)) interacts with NAD(+).

This sequence belongs to the transcriptional regulatory Rex family. Homodimer.

The protein resides in the cytoplasm. Modulates transcription in response to changes in cellular NADH/NAD(+) redox state. The protein is Redox-sensing transcriptional repressor Rex 1 of Thermotoga maritima (strain ATCC 43589 / DSM 3109 / JCM 10099 / NBRC 100826 / MSB8).